The chain runs to 290 residues: Shikimate dehydrogenase (NADP(+)) (290 aa).

Residues 18–20 (SYS) and threonine 66 contribute to the shikimate site. The active-site Proton acceptor is the lysine 70. Asparagine 91 and aspartate 106 together coordinate shikimate. NADP(+)-binding positions include 130–134 (GNGGA) and methionine 230. Position 232 (tyrosine 232) interacts with shikimate. An NADP(+)-binding site is contributed by glycine 253.

This sequence belongs to the shikimate dehydrogenase family. In terms of assembly, homodimer.

It catalyses the reaction shikimate + NADP(+) = 3-dehydroshikimate + NADPH + H(+). Its pathway is metabolic intermediate biosynthesis; chorismate biosynthesis; chorismate from D-erythrose 4-phosphate and phosphoenolpyruvate: step 4/7. Involved in the biosynthesis of the chorismate, which leads to the biosynthesis of aromatic amino acids. Catalyzes the reversible NADPH linked reduction of 3-dehydroshikimate (DHSA) to yield shikimate (SA). The sequence is that of Shikimate dehydrogenase (NADP(+)) from Prosthecochloris aestuarii (strain DSM 271 / SK 413).